The primary structure comprises 1073 residues: Transmembrane protein 132E (1073 aa).

The first 33 residues, 1-33, serve as a signal peptide directing secretion; that stretch reads MGHFVVQGDLPWILCSLRLVIMIIAGKVSPTSS. Topologically, residues 34–899 are extracellular; that stretch reads DALFSVPVPS…MTDLEIGMYA (866 aa). Residue asparagine 102 is glycosylated (N-linked (GlcNAc...) asparagine). Residues 246-270 form a disordered region; it reads DPDSNDECGESYPRRGGPSRGESLS. Residues asparagine 324, asparagine 396, and asparagine 746 are each glycosylated (N-linked (GlcNAc...) asparagine). The chain crosses the membrane as a helical span at residues 900–920; sequence LLGVFCLAILVFLINCIVFVL. Over 921–1073 the chain is Cytoplasmic; the sequence is KYRHKRIPPE…DYMRRIKEIA (153 aa). Positions 952–970 are enriched in polar residues; the sequence is TQSDLSPQTVESPSNTLEG. The segment at 952 to 1024 is disordered; the sequence is TQSDLSPQTV…PTSKRKRVKF (73 aa). Over residues 982-994 the composition is skewed to low complexity; the sequence is SGSSQTSVQSQVH.

Belongs to the TMEM132 family.

The protein localises to the membrane. In terms of biological role, required for normal inner ear hair cell function and hearing. The polypeptide is Transmembrane protein 132E (tmem132e) (Danio rerio (Zebrafish)).